Here is an 820-residue protein sequence, read N- to C-terminus: Phenylalanine--tRNA ligase beta subunit (820 aa).

The tRNA-binding domain occupies 42–154 (KGGLEGLVIG…AEAVPGTLAK (113 aa)). The B5 domain maps to 413–489 (PQDFMVELSY…RIYGYNNVEI (77 aa)). Mg(2+) is bound by residues Asp-467, Asp-473, Glu-476, and Asp-477. Residues 727–820 (SKFPAVKRDL…LEDKLNAKLR (94 aa)) enclose the FDX-ACB domain.

This sequence belongs to the phenylalanyl-tRNA synthetase beta subunit family. Type 1 subfamily. In terms of assembly, tetramer of two alpha and two beta subunits. Requires Mg(2+) as cofactor.

It localises to the cytoplasm. It catalyses the reaction tRNA(Phe) + L-phenylalanine + ATP = L-phenylalanyl-tRNA(Phe) + AMP + diphosphate + H(+). The sequence is that of Phenylalanine--tRNA ligase beta subunit from Bacteroides thetaiotaomicron (strain ATCC 29148 / DSM 2079 / JCM 5827 / CCUG 10774 / NCTC 10582 / VPI-5482 / E50).